The chain runs to 61 residues: Large ribosomal subunit protein uL30 (61 aa).

Belongs to the universal ribosomal protein uL30 family. As to quaternary structure, part of the 50S ribosomal subunit.

The protein is Large ribosomal subunit protein uL30 of Colwellia psychrerythraea (strain 34H / ATCC BAA-681) (Vibrio psychroerythus).